The sequence spans 292 residues: Probable endonuclease 4 (292 aa).

His-71, His-111, Glu-148, Asp-182, His-185, His-217, Asp-230, His-232, and Glu-262 together coordinate Zn(2+).

The protein belongs to the AP endonuclease 2 family. Requires Zn(2+) as cofactor.

It catalyses the reaction Endonucleolytic cleavage to 5'-phosphooligonucleotide end-products.. In terms of biological role, endonuclease IV plays a role in DNA repair. It cleaves phosphodiester bonds at apurinic or apyrimidinic (AP) sites, generating a 3'-hydroxyl group and a 5'-terminal sugar phosphate. The polypeptide is Probable endonuclease 4 (Aster yellows witches'-broom phytoplasma (strain AYWB)).